The following is a 112-amino-acid chain: Large ribosomal subunit protein eL33w (112 aa).

Belongs to the eukaryotic ribosomal protein eL33 family.

The protein is Large ribosomal subunit protein eL33w (RPL35AA) of Arabidopsis thaliana (Mouse-ear cress).